Reading from the N-terminus, the 396-residue chain is NADH-quinone oxidoreductase subunit D (396 aa).

It belongs to the complex I 49 kDa subunit family. As to quaternary structure, NDH-1 is composed of 14 different subunits. Subunits NuoB, C, D, E, F, and G constitute the peripheral sector of the complex.

The protein localises to the cell inner membrane. The enzyme catalyses a quinone + NADH + 5 H(+)(in) = a quinol + NAD(+) + 4 H(+)(out). Functionally, NDH-1 shuttles electrons from NADH, via FMN and iron-sulfur (Fe-S) centers, to quinones in the respiratory chain. The immediate electron acceptor for the enzyme in this species is believed to be ubiquinone. Couples the redox reaction to proton translocation (for every two electrons transferred, four hydrogen ions are translocated across the cytoplasmic membrane), and thus conserves the redox energy in a proton gradient. This is NADH-quinone oxidoreductase subunit D from Methylorubrum populi (strain ATCC BAA-705 / NCIMB 13946 / BJ001) (Methylobacterium populi).